Consider the following 69-residue polypeptide: Sec-independent protein translocase protein TatA (69 aa).

The chain crosses the membrane as a helical span at residues 1-21 (MGSLSIWHWLIVLAIALLLFG). The tract at residues 41-69 (KGMNDDEETPPPAQSTTSRTVEHKADESK) is disordered. Over residues 60 to 69 (TVEHKADESK) the composition is skewed to basic and acidic residues.

It belongs to the TatA/E family. In terms of assembly, the Tat system comprises two distinct complexes: a TatABC complex, containing multiple copies of TatA, TatB and TatC subunits, and a separate TatA complex, containing only TatA subunits. Substrates initially bind to the TatABC complex, which probably triggers association of the separate TatA complex to form the active translocon.

Its subcellular location is the cell inner membrane. Part of the twin-arginine translocation (Tat) system that transports large folded proteins containing a characteristic twin-arginine motif in their signal peptide across membranes. TatA could form the protein-conducting channel of the Tat system. The protein is Sec-independent protein translocase protein TatA of Rhizobium rhizogenes (strain K84 / ATCC BAA-868) (Agrobacterium radiobacter).